A 276-amino-acid polypeptide reads, in one-letter code: uncharacterized protein (276 aa).

Residues M1–G4 constitute a propeptide, leader sequence. At M5 the chain carries N-methylmethionine. The helical transmembrane segment at M5–Y26 threads the bilayer.

The protein localises to the membrane. This is an uncharacterized protein from Aquifex aeolicus (strain VF5).